The chain runs to 159 residues: Heterocyst differentiation protein HetP (159 aa).

The tract at residues 1-50 (MNQNTTGITNYNKAINPQQFDKVVEAILAGKYSWACVLMLRFAGYNPMHY) is required to complement a hetP deletion.

The protein belongs to the HetP family. In terms of assembly, in bacterial two-hybrid assays interacts weakly with Asl1930, Alr2902 and Alr3234.

Its function is as follows. Promotes heterocyst differentiation and commitment when nitrogen is limiting. Interplay between the 4 HetP paralogs controls the timing of commitment to heterocyst formation and its duration. Epistatic analysis show that the 3 paralogs act upstream of hetP to delay commitment (asl1930, alr3234) or inhibit development (alr2902). Asl1930 and Alr3234 must also attenuate the activity of Alr2902. Required for heterocyst formation. Functions directly downstream of master regulator HetR to promote heterocyst differentiation, functioning downstream of patterning (cell choice). Partially functionally redundant with homologs alr2902 and asl1930 but not alr3234. Overexpression leads to more than wild-type levels of heterocysts. Overexpression in the absence of hetR partially bypasses hetR deletion, allowing differentiation of heterocysts, although they only fix nitrogen in the absence of oxygen (a Fox- Fix+ phenotype), suggesting they are not fully. This is Heterocyst differentiation protein HetP from Nostoc sp. (strain PCC 7120 / SAG 25.82 / UTEX 2576).